The sequence spans 340 residues: Protein RecA (340 aa).

65–72 (GPESGGKT) contributes to the ATP binding site.

It belongs to the RecA family.

The protein resides in the cytoplasm. Can catalyze the hydrolysis of ATP in the presence of single-stranded DNA, the ATP-dependent uptake of single-stranded DNA by duplex DNA, and the ATP-dependent hybridization of homologous single-stranded DNAs. It interacts with LexA causing its activation and leading to its autocatalytic cleavage. The polypeptide is Protein RecA (Thermus thermophilus).